Reading from the N-terminus, the 675-residue chain is Heat shock 70 kDa protein 12A (675 aa).

The segment covering 1–13 (MADKEAGGSDGPR) has biased composition (basic and acidic residues). The tract at residues 1–45 (MADKEAGGSDGPRETAPTSAYSSPARSLGDTGITPLSPSHIVNDT) is disordered. Position 2 is an N-acetylalanine (A2). Composition is skewed to polar residues over residues 16–25 (APTSAYSSPA) and 34–45 (TPLSPSHIVNDT).

This sequence belongs to the heat shock protein 70 family. In terms of assembly, interacts with SORL1 (via cytosolic C-terminus); this interaction affects SORL1 internalization and subcellular localization. In terms of tissue distribution, widely expressed with highest levels in brain, kidney and muscle.

Its subcellular location is the cytoplasm. The protein localises to the nucleus. Adapter protein for SORL1, but not SORT1. Delays SORL1 internalization and affects SORL1 subcellular localization. The protein is Heat shock 70 kDa protein 12A (HSPA12A) of Homo sapiens (Human).